The primary structure comprises 360 residues: Geranylgeranyl pyrophosphate synthase 3, chloroplastic (360 aa).

The N-terminal 39 residues, 1 to 39 (MATTVHLSSFSLFIQSRGRRDNSISSVKSLKKRTGLSPS), are a transit peptide targeting the chloroplast. The tract at residues 24–54 (ISSVKSLKKRTGLSPSSALTSQGGRDMIPPE) is disordered. Over residues 36-46 (LSPSSALTSQG) the composition is skewed to polar residues. Residues Lys-106, Arg-109, and His-138 each coordinate isopentenyl diphosphate. Positions 145 and 151 each coordinate Mg(2+). Residue Arg-156 coordinates dimethylallyl diphosphate. Arg-157 serves as a coordination point for isopentenyl diphosphate. Lys-245, Thr-246, Gln-283, Lys-300, and Lys-310 together coordinate dimethylallyl diphosphate.

The protein belongs to the FPP/GGPP synthase family. In terms of assembly, monomer. The cofactor is Mg(2+). As to expression, mainly expressed in roots.

The protein resides in the plastid. Its subcellular location is the chloroplast. The catalysed reaction is isopentenyl diphosphate + dimethylallyl diphosphate = (2E)-geranyl diphosphate + diphosphate. The enzyme catalyses isopentenyl diphosphate + (2E)-geranyl diphosphate = (2E,6E)-farnesyl diphosphate + diphosphate. It catalyses the reaction isopentenyl diphosphate + (2E,6E)-farnesyl diphosphate = (2E,6E,10E)-geranylgeranyl diphosphate + diphosphate. Its pathway is isoprenoid biosynthesis; farnesyl diphosphate biosynthesis; farnesyl diphosphate from geranyl diphosphate and isopentenyl diphosphate: step 1/1. It participates in isoprenoid biosynthesis; geranyl diphosphate biosynthesis; geranyl diphosphate from dimethylallyl diphosphate and isopentenyl diphosphate: step 1/1. The protein operates within isoprenoid biosynthesis; geranylgeranyl diphosphate biosynthesis; geranylgeranyl diphosphate from farnesyl diphosphate and isopentenyl diphosphate: step 1/1. Its function is as follows. Catalyzes the trans-addition of the three molecules of IPP onto DMAPP to form geranylgeranyl pyrophosphate. The sequence is that of Geranylgeranyl pyrophosphate synthase 3, chloroplastic (GGPP3) from Arabidopsis thaliana (Mouse-ear cress).